The sequence spans 685 residues: MTRKILVTSALPYANGSIHLGHMVEHIQTDVWVRFQKLRGHACHYCCADDTHGTPVMLAAQKQGIAPEDMIAKVREEHLADFTGFFIGYDNYYSTHSPENKQFSQDIYRALKANGKIESRVIEQLFDPEKQMFLPDRFVKGECPKCHAQDQYGDNCEVCGTTYSPTELINPYSAVSGTKPELRESEHFFFKLGECADFLKAWTSGNNPHDGKPHLQAEALNKMKEWLGEGEETTLSDWDISRDAPYFGFEIPDAPGKYFYVWLDAPVGYMASFKNLCDRIGVDFDEYFKADSQTEMYHFIGKDILYFHALFWPAMLHFSGHRAPTGVYAHGFLTVDGQKMSKSRGTFITAKSYLEQGLNPEWMRYYIAAKLNSKIEDIDLNLQDFISRVNSDLVGKYVNIAARASGFIAKRFEGRLKDVADSELLAKLTAQSEAIAECYESREYAKALRDIMALADIVNEYVDANKPWELAKQEGQDERLHEVCSELINAFTMLTAYLAPVLPQTAANAAKFLNLEAITWANTRDTLGKHAINKYEHLMQRVEQKQVDDLIEANKQSIAAAAAPAAEEGKYEKVAEQASFDDFMKIDMRVAKVLNCEAVEGSTKLLKFDLDFGFEKRIIFSGIAASYPNPAELNGRMVIAVANFAPRKMAKFGVSEGMILSAATADGKLKLLDVDTGAQPGDKVG.

Positions 12-22 (PYANGSIHLGH) match the 'HIGH' region motif. C143, C146, C156, and C159 together coordinate Zn(2+). The 'KMSKS' region motif lies at 339–343 (KMSKS). K342 contributes to the ATP binding site. A tRNA-binding domain is found at 582–685 (DFMKIDMRVA…TGAQPGDKVG (104 aa)).

It belongs to the class-I aminoacyl-tRNA synthetase family. MetG type 1 subfamily. As to quaternary structure, homodimer. Zn(2+) serves as cofactor.

It localises to the cytoplasm. The catalysed reaction is tRNA(Met) + L-methionine + ATP = L-methionyl-tRNA(Met) + AMP + diphosphate. Functionally, is required not only for elongation of protein synthesis but also for the initiation of all mRNA translation through initiator tRNA(fMet) aminoacylation. The chain is Methionine--tRNA ligase from Neisseria meningitidis serogroup B (strain ATCC BAA-335 / MC58).